The sequence spans 161 residues: Regulator of ribonuclease activity A (161 aa).

Belongs to the RraA family. As to quaternary structure, homotrimer. Binds to both RNA-binding sites in the C-terminal region of Rne and to RhlB.

It localises to the cytoplasm. Its function is as follows. Globally modulates RNA abundance by binding to RNase E (Rne) and regulating its endonucleolytic activity. Can modulate Rne action in a substrate-dependent manner by altering the composition of the degradosome. Modulates RNA-binding and helicase activities of the degradosome. The polypeptide is Regulator of ribonuclease activity A (Photobacterium profundum (strain SS9)).